We begin with the raw amino-acid sequence, 62 residues long: Protein YmcF (62 aa).

Belongs to the YmcF/YnqF peptide family.

This is Protein YmcF from Escherichia coli (strain K12).